We begin with the raw amino-acid sequence, 500 residues long: Kynurenine 3-monooxygenase (500 aa).

Belongs to the aromatic-ring hydroxylase family. KMO subfamily. FAD serves as cofactor.

It localises to the mitochondrion outer membrane. The catalysed reaction is L-kynurenine + NADPH + O2 + H(+) = 3-hydroxy-L-kynurenine + NADP(+) + H2O. It participates in cofactor biosynthesis; NAD(+) biosynthesis; quinolinate from L-kynurenine: step 1/3. In terms of biological role, catalyzes the hydroxylation of L-kynurenine (L-Kyn) to form 3-hydroxy-L-kynurenine (L-3OHKyn). Required for synthesis of quinolinic acid. The sequence is that of Kynurenine 3-monooxygenase (bna4) from Aspergillus terreus (strain NIH 2624 / FGSC A1156).